The chain runs to 391 residues: Coiled-coil domain-containing protein 85C-A (391 aa).

2 coiled-coil regions span residues 23-87 (KCSK…ELCC) and 121-146 (FQQK…KEII). A disordered region spans residues 154 to 212 (NGAGSRSSIDSQSSLSNLNGGSATVRDVGDGSSTSSTGSAGSPDHHHSHIHKPTEGKIT). Low complexity-rich tracts occupy residues 158–175 (SRSS…NGGS) and 183–195 (DGSS…SAGS).

This sequence belongs to the CCDC85 family.

The protein resides in the cell junction. It is found in the tight junction. The protein localises to the adherens junction. Functionally, may play a role in cell-cell adhesion and epithelium development through its interaction with proteins of the beta-catenin family. May play an important role in cortical development, especially in the maintenance of radial glia. The polypeptide is Coiled-coil domain-containing protein 85C-A (ccdc85ca) (Danio rerio (Zebrafish)).